A 242-amino-acid polypeptide reads, in one-letter code: MAPK-interacting and spindle-stabilizing protein-like (242 aa).

2 disordered regions span residues Met-1–Pro-145 and Pro-192–His-242. At Ser-2 the chain carries N-acetylserine. Phosphoserine occurs at positions 2, 6, and 15. Positions Glu-13 to His-29 are enriched in polar residues. Over residues Ser-30–Pro-43 the composition is skewed to low complexity. Pro residues-rich tracts occupy residues Ser-44 to Leu-53 and Ser-75 to Thr-114. A compositionally biased stretch (low complexity) spans Pro-192–Pro-210.

This sequence belongs to the MISS family.

The polypeptide is MAPK-interacting and spindle-stabilizing protein-like (Mapk1ip1l) (Mus musculus (Mouse)).